The chain runs to 349 residues: N-acetyltaurine hydrolase (349 aa).

A divalent metal cation is bound by residues H26, H28, E169, H201, H230, and D298.

It belongs to the metallo-dependent hydrolases superfamily. Phosphotriesterase family. A divalent metal cation serves as cofactor.

It localises to the cytoplasm. The protein localises to the cytosol. It carries out the reaction N-acetyltaurine + H2O = taurine + acetate. The enzyme catalyses N-propanoyltaurine + H2O = propanoate + taurine. It catalyses the reaction N-acetyl-L-methionine + H2O = L-methionine + acetate. The catalysed reaction is N-acetyl-L-isoleucine + H2O = L-isoleucine + acetate. It carries out the reaction N-acetyl-L-leucine + H2O = L-leucine + acetate. The enzyme catalyses N-acetyl-L-valine + H2O = L-valine + acetate. N-acetyltaurine hydrolase that regulates feeding by catalyzing the hydrolysis of N-acetyltaurine into taurine and acetate. N-acetyltaurine has anorexigenic and anti-obesity effects that are dependent on GFRAL receptor and GDF15. PTER also acts on other N-acetyl amino acids (Met, Ile, Leu, Val) and N-propionyltaurine, but at lower rates. This is N-acetyltaurine hydrolase from Pongo abelii (Sumatran orangutan).